A 573-amino-acid polypeptide reads, in one-letter code: MANRQQPSPMPTAKYRGYDQVDIADRTWPNQRITTAPRWLSTDLRDGNQALIDPMSPVRKRAMFDLLVKMGYKEIEVGFPASGQTDFDFVRSIIEEPGAIPDDVTISVLTQAREDLIERTVESLKGARRATVHLYNATAPVFRRVVFRGSRDDIKQIAVDGTRLVMEYAEKLLGPETEFGYQYSPEIFTDTELDFALEVCEAVMDTYQPGPGREIILNLPATVERSTPSTHADRFEWMGRNLSRREHVCLSVHPHNDRGTAVAAAELALMAGADRIEGCLFGQGERTGNVDLVTLGMNLFSQGVDPQIDFSDIDEIRRTWEYCNQMEVHPRHPYVGDLVYTSFSGSHQDAIKKGFDAMEADAAARGVTVDDIEWAVPYLPIDPKDVGRSYEAVIRVNSQSGKGGIAYVLKNDHSLDLPRRMQIEFSKLIQAKTDAEGGEITPTAIWDVFQDEYLPNPDNPWGRIQVANGQTTTDRDGVDTLTVDATVDGAETTLVGSGNGPISAFFHALQGVGIDVRLLDYQEHTMSEGASAQAASYIECAIGDKVLWGIGIDANTTRASLKAVVSAVNRATR.

The Pyruvate carboxyltransferase domain occupies Pro-37 to Asp-314. Mg(2+)-binding residues include Asp-46, His-253, His-255, and Asn-289. The segment at Asn-456–Arg-573 is regulatory domain.

The protein belongs to the alpha-IPM synthase/homocitrate synthase family. LeuA type 2 subfamily. As to quaternary structure, homodimer. The cofactor is Mg(2+).

It is found in the cytoplasm. The catalysed reaction is 3-methyl-2-oxobutanoate + acetyl-CoA + H2O = (2S)-2-isopropylmalate + CoA + H(+). It participates in amino-acid biosynthesis; L-leucine biosynthesis; L-leucine from 3-methyl-2-oxobutanoate: step 1/4. Its function is as follows. Catalyzes the condensation of the acetyl group of acetyl-CoA with 3-methyl-2-oxobutanoate (2-ketoisovalerate) to form 3-carboxy-3-hydroxy-4-methylpentanoate (2-isopropylmalate). The polypeptide is 2-isopropylmalate synthase (Streptomyces coelicolor (strain ATCC BAA-471 / A3(2) / M145)).